Reading from the N-terminus, the 418-residue chain is MDATTIDLEQMGRAAKTAAMTLGQLTTLQKNTGLLAMAAALETHADTILAANKADLAAASALPEKFVDRLALTKARIADMAAGVRQVATLDDPTAQTDRAWVNEAGLTIAQKRVPLGVVGMIYEARPNVTVDAAALTFKSGNAVILRGGKEALHSNLALATVLQDALAAKGLPRDAVQLITDPSRAVATQMMHLNGYIDVLIPRGGKGLIKAVVEQATVPVIETGAGNCHIYVDAHAQLQMAVAIVVNAKVQRPSVCNAAEKLLIHADVANEQLPVIAKALQDHGVELRGDERARAIVPSMHAATAEDWDTEYNDLIMAVKVVDSEEEAIQHINAHNTKHSEAIITDNYQNSQQFLQQVDAAVVYVNASTRFTDGYEFGFGAEIGISTQKLHARGPMGLAALTTIKYQVLGNGQIRKN.

It belongs to the gamma-glutamyl phosphate reductase family.

Its subcellular location is the cytoplasm. It carries out the reaction L-glutamate 5-semialdehyde + phosphate + NADP(+) = L-glutamyl 5-phosphate + NADPH + H(+). Its pathway is amino-acid biosynthesis; L-proline biosynthesis; L-glutamate 5-semialdehyde from L-glutamate: step 2/2. In terms of biological role, catalyzes the NADPH-dependent reduction of L-glutamate 5-phosphate into L-glutamate 5-semialdehyde and phosphate. The product spontaneously undergoes cyclization to form 1-pyrroline-5-carboxylate. The protein is Gamma-glutamyl phosphate reductase of Lacticaseibacillus casei (strain BL23) (Lactobacillus casei).